The primary structure comprises 142 residues: uncharacterized protein (142 aa).

This is an uncharacterized protein from Acanthamoeba polyphaga (Amoeba).